Reading from the N-terminus, the 360-residue chain is Peptide chain release factor 1 (360 aa).

Position 237 is an N5-methylglutamine (Gln237).

The protein belongs to the prokaryotic/mitochondrial release factor family. In terms of processing, methylated by PrmC. Methylation increases the termination efficiency of RF1.

It is found in the cytoplasm. Its function is as follows. Peptide chain release factor 1 directs the termination of translation in response to the peptide chain termination codons UAG and UAA. The protein is Peptide chain release factor 1 of Pseudomonas putida (strain ATCC 700007 / DSM 6899 / JCM 31910 / BCRC 17059 / LMG 24140 / F1).